Here is a 123-residue protein sequence, read N- to C-terminus: MAKIKARDLRGKKKEELLKQLDDLKVELSQLRVAKVTGGAASKLSKIRVVRKSIARVLTVINQTQKENLRKFYKGKKYKPLDLRPKKTRAIRRQLTKHEENLMTKKMQRKSRLYSIRKFAVKA.

The protein belongs to the universal ribosomal protein uL29 family. Component of the large ribosomal subunit.

It localises to the cytoplasm. Component of the large ribosomal subunit. The ribosome is a large ribonucleoprotein complex responsible for the synthesis of proteins in the cell. Plays an essential role in early embryonic development. May act as a haploinsufficient tumor suppressor. This chain is Large ribosomal subunit protein uL29 (rpl35), found in Danio rerio (Zebrafish).